Here is a 105-residue protein sequence, read N- to C-terminus: Large ribosomal subunit protein eL30 (105 aa).

Belongs to the eukaryotic ribosomal protein eL30 family.

In Methanococcus vannielii (strain ATCC 35089 / DSM 1224 / JCM 13029 / OCM 148 / SB), this protein is Large ribosomal subunit protein eL30 (rpl30e).